The following is a 216-amino-acid chain: UPF0502 protein Ent638_1581 (216 aa).

The protein belongs to the UPF0502 family.

The chain is UPF0502 protein Ent638_1581 from Enterobacter sp. (strain 638).